The sequence spans 186 residues: Transposons Tn1721 resolvase (186 aa).

Residues 4-137 (HRIGYVRVSS…EGIALAKQRG (134 aa)) form the Resolvase/invertase-type recombinase catalytic domain. Ser12 functions as the O-(5'-phospho-DNA)-serine intermediate in the catalytic mechanism. The segment at residues 164–183 (KAQLAREFNISRETLYQYLR) is a DNA-binding region (H-T-H motif).

The protein belongs to the site-specific recombinase resolvase family.

Resolvase catalyzes the resolution (a site-specific recombination) of the cointegrated replicon to yield the final transposition products. This Escherichia coli protein is Transposons Tn1721 resolvase (tnpR).